A 416-amino-acid polypeptide reads, in one-letter code: Serine hydroxymethyltransferase (416 aa).

(6S)-5,6,7,8-tetrahydrofolate is bound by residues L121 and 125 to 127; that span reads GHL. Residue K229 is modified to N6-(pyridoxal phosphate)lysine.

The protein belongs to the SHMT family. In terms of assembly, homodimer. It depends on pyridoxal 5'-phosphate as a cofactor.

The protein localises to the cytoplasm. It carries out the reaction (6R)-5,10-methylene-5,6,7,8-tetrahydrofolate + glycine + H2O = (6S)-5,6,7,8-tetrahydrofolate + L-serine. The protein operates within one-carbon metabolism; tetrahydrofolate interconversion. It functions in the pathway amino-acid biosynthesis; glycine biosynthesis; glycine from L-serine: step 1/1. In terms of biological role, catalyzes the reversible interconversion of serine and glycine with tetrahydrofolate (THF) serving as the one-carbon carrier. This reaction serves as the major source of one-carbon groups required for the biosynthesis of purines, thymidylate, methionine, and other important biomolecules. Also exhibits THF-independent aldolase activity toward beta-hydroxyamino acids, producing glycine and aldehydes, via a retro-aldol mechanism. The sequence is that of Serine hydroxymethyltransferase from Neisseria gonorrhoeae.